The sequence spans 243 residues: 2-C-methyl-D-erythritol 4-phosphate cytidylyltransferase (243 aa).

This sequence belongs to the IspD/TarI cytidylyltransferase family. IspD subfamily.

The enzyme catalyses 2-C-methyl-D-erythritol 4-phosphate + CTP + H(+) = 4-CDP-2-C-methyl-D-erythritol + diphosphate. It participates in isoprenoid biosynthesis; isopentenyl diphosphate biosynthesis via DXP pathway; isopentenyl diphosphate from 1-deoxy-D-xylulose 5-phosphate: step 2/6. Its function is as follows. Catalyzes the formation of 4-diphosphocytidyl-2-C-methyl-D-erythritol from CTP and 2-C-methyl-D-erythritol 4-phosphate (MEP). In Colwellia psychrerythraea (strain 34H / ATCC BAA-681) (Vibrio psychroerythus), this protein is 2-C-methyl-D-erythritol 4-phosphate cytidylyltransferase.